The chain runs to 469 residues: Ubiquitin carboxyl-terminal hydrolase MINDY-1 (469 aa).

A disordered region spans residues 1–85 (MEYHQPEDPA…APPGPTLGTL (85 aa)). Basic and acidic residues predominate over residues 23–53 (ENHEVLAGPDEHPQDTDARDADGEAREREPA). A compositionally biased stretch (low complexity) spans 66–76 (LESPLPEASSA). Ser103 carries the phosphoserine modification. Cys137 acts as the Nucleophile in catalysis. The active-site Proton acceptor is His319. The tract at residues 388–426 (QVDQDYLIALSLQQQQPRGPLGLTDLELAQQLQQEEYQQ) is ubiquitin-binding domain (UBD). Residue Ser441 is modified to Phosphoserine. Residues 441-469 (SLQGRGATSGRPAGERRQRPKHESDCILL) form a disordered region. Positions 453–469 (AGERRQRPKHESDCILL) are enriched in basic and acidic residues.

The protein belongs to the MINDY deubiquitinase family. FAM63 subfamily.

It catalyses the reaction Thiol-dependent hydrolysis of ester, thioester, amide, peptide and isopeptide bonds formed by the C-terminal Gly of ubiquitin (a 76-residue protein attached to proteins as an intracellular targeting signal).. Functionally, hydrolase that can specifically remove 'Lys-48'-linked conjugated ubiquitin from proteins. Has exodeubiquitinase activity and has a preference for long polyubiquitin chains. May play a regulatory role at the level of protein turnover. This chain is Ubiquitin carboxyl-terminal hydrolase MINDY-1, found in Homo sapiens (Human).